Consider the following 119-residue polypeptide: Small ribosomal subunit protein uS10 (119 aa).

It belongs to the universal ribosomal protein uS10 family. In terms of assembly, component of the 40S small ribosomal subunit.

It is found in the cytoplasm. Component of the small ribosomal subunit. The ribosome is a large ribonucleoprotein complex responsible for the synthesis of proteins in the cell. The sequence is that of Small ribosomal subunit protein uS10 (rps20) from Xenopus laevis (African clawed frog).